Reading from the N-terminus, the 51-residue chain is Large ribosomal subunit protein bL33 (51 aa).

It belongs to the bacterial ribosomal protein bL33 family.

The chain is Large ribosomal subunit protein bL33 from Alteromonas mediterranea (strain DSM 17117 / CIP 110805 / LMG 28347 / Deep ecotype).